We begin with the raw amino-acid sequence, 152 residues long: Transcriptional regulator MraZ (152 aa).

SpoVT-AbrB domains are found at residues 5 to 52 and 81 to 124; these read ASAI…PIHE and AHEV…DEQS.

The protein belongs to the MraZ family. Forms oligomers.

It is found in the cytoplasm. Its subcellular location is the nucleoid. This chain is Transcriptional regulator MraZ, found in Shewanella baltica (strain OS195).